A 103-amino-acid chain; its full sequence is Small ribosomal subunit protein uS10 (103 aa).

This sequence belongs to the universal ribosomal protein uS10 family. In terms of assembly, part of the 30S ribosomal subunit.

Its function is as follows. Involved in the binding of tRNA to the ribosomes. The polypeptide is Small ribosomal subunit protein uS10 (Campylobacter hominis (strain ATCC BAA-381 / DSM 21671 / CCUG 45161 / LMG 19568 / NCTC 13146 / CH001A)).